The following is a 66-amino-acid chain: Large ribosomal subunit protein uL29 (66 aa).

This sequence belongs to the universal ribosomal protein uL29 family.

This Geobacillus kaustophilus (strain HTA426) protein is Large ribosomal subunit protein uL29.